The following is a 1003-amino-acid chain: VAPVVPDLSSDIDTSNFDDLEEDKGEEETFPIPKAFVGNQLPFVGFTYYSNRRYLSSANPNDNRTSSNADKSLQESLQKTIYKLEEQLHNEMQLKDEMEQKCRTSNIKLDKIMKELDEEGNQRRNLESTVSQIEKEKMLLQHRINEYQRKAEQENEKRRNVENEVSTLKDQLEDLKKVSQNSQLANEKLSQLQKQLEEANDLLRTESDTAVRLRKSHTEMSKSISQLESLNRELQERNRILENSKSQTDKDYYQLQAILEAERRDRGHDSEMIGDLQARITSLQEEVKHLKHNLEKVEGERKEAQDMLNHSEKEKNNLEIDLNYKLKSLQQRLEQEVNEHKVTKARLTDKHQSIEEAKSVAMCEMEKKLKEEREAREKAENRVVQIEKQCSMLDVDLKQSQQKLEHLTGNKERMEDEVKNLTLQLEQESNKRLLLQNELKTQAFEADNLKGLEKQMKQEINTLLEAKRLLEFELAQLTKQYRGNEGQMRELQDQLEAEQYFSTLYKTQVKELKEEIEEKNRENLKKIQELQNEKETLATQLDLAETKAESEQLARGLLEEQYFELTQESKKAASRNRQEITDKDHTVSRLEEANSMLTKDIEILRRENEELTEKMKKAEEEYKLEKEEEISNLKAAFEKNINTERTLKTQAVNKLAEIMNRKDFKIDRKKANTQDLRKKEKENRKLQLELNQEREKFNQMVVKHQKELNDMQAQLVEECAHRNELQMQLASKESDIEQLRAKLLDLSDSTSVASFPSADETDGNLPESRIEGWLSVPNRGNIKRYGWKKQYVVVSSKKILFYNDEQDKEQSNPSMVLDIDKLFHVRPVTQGDVYRAETEEIPKIFQILYANEGECRKDVEMEPVQQAEKTNFQNHKGHEFIPTLYHFPANCDACAKPLWHVFKPPPALECRRCHVKCHRDHLDKKEDLICPCKVSYDVTSARDMLLLACSQDEQKKWVTHLVKKIPKNPPSGFVRASPRTLSTRSTANQSFRKVVKNTSGKTR.

Residues 1–28 (VAPVVPDLSSDIDTSNFDDLEEDKGEEE) are disordered. The AGC-kinase C-terminal domain maps to 1 to 58 (VAPVVPDLSSDIDTSNFDDLEEDKGEEETFPIPKAFVGNQLPFVGFTYYSNRRYLSSA). Residues 16–28 (NFDDLEEDKGEEE) are compositionally biased toward acidic residues. An interaction with FHOD1 region spans residues 17–376 (FDDLEEDKGE…KKLKEEREAR (360 aa)). Positions 71–341 (KSLQESLQKT…RLEQEVNEHK (271 aa)) form a coiled coil. The REM-1 domain occupies 128 to 205 (STVSQIEKEK…LEEANDLLRT (78 aa)). Position 296 is an N6-acetyllysine (Lys296). The tract at residues 356-595 (EAKSVAMCEM…TVSRLEEANS (240 aa)) is SHROOM3 binding. In terms of domain architecture, RhoBD spans 598 to 664 (TKDIEILRRE…LAEIMNRKDF (67 aa)). The interval 647–659 (LKTQAVNKLAEIM) is RHOA binding. The stretch at 660 to 751 (NRKDFKIDRK…KLLDLSDSTS (92 aa)) forms a coiled coil. Phosphoserine is present on residues Ser754 and Ser757. The interval 764–1003 (NLPESRIEGW…VVKNTSGKTR (240 aa)) is auto-inhibitory. The region spanning 767 to 966 (ESRIEGWLSV…WVTHLVKKIP (200 aa)) is the PH domain. A Phorbol-ester/DAG-type zinc finger spans residues 877–930 (GHEFIPTLYHFPANCDACAKPLWHVFKPPPALECRRCHVKCHRDHLDKKEDLIC). A disordered region spans residues 968–1003 (NPPSGFVRASPRTLSTRSTANQSFRKVVKNTSGKTR). Residue Ser977 is modified to Phosphoserine. A compositionally biased stretch (polar residues) spans 979–1003 (RTLSTRSTANQSFRKVVKNTSGKTR).

This sequence belongs to the protein kinase superfamily. AGC Ser/Thr protein kinase family. In terms of assembly, homodimer. Interacts with RHOA (activated by GTP), RHOB, RHOC, GEM, MYLC2B, RHOE, PPP1R12A, LIMK1, LIMK2, TSG101, CHORDC1, DAPK3, PFN1, PTEN and JIP3. Interacts with ITGB1BP1 (via N-terminus and PTB domain). Interacts with FHOD1 in a Src-dependent manner. Interacts with SHROOM3. Requires Mg(2+) as cofactor. Post-translationally, autophosphorylated on serine and threonine residues. Cleaved by caspase-3 during apoptosis. This leads to constitutive activation of the kinase and membrane blebbing.

Its subcellular location is the cytoplasm. The protein localises to the cytoskeleton. It is found in the microtubule organizing center. It localises to the centrosome. The protein resides in the centriole. Its subcellular location is the golgi apparatus membrane. The protein localises to the cell projection. It is found in the bleb. It localises to the cell membrane. The protein resides in the lamellipodium. Its subcellular location is the ruffle. The enzyme catalyses L-seryl-[protein] + ATP = O-phospho-L-seryl-[protein] + ADP + H(+). It catalyses the reaction L-threonyl-[protein] + ATP = O-phospho-L-threonyl-[protein] + ADP + H(+). Its activity is regulated as follows. Activated by RHOA binding. Inhibited by Y-27632. In terms of biological role, protein kinase which is a key regulator of actin cytoskeleton and cell polarity. Involved in regulation of smooth muscle contraction, actin cytoskeleton organization, stress fiber and focal adhesion formation, neurite retraction, cell adhesion and motility via phosphorylation of DAPK3, GFAP, LIMK1, LIMK2, MYL9/MLC2, TPPP, PFN1 and PPP1R12A. Phosphorylates FHOD1 and acts synergistically with it to promote SRC-dependent non-apoptotic plasma membrane blebbing. Phosphorylates JIP3 and regulates the recruitment of JNK to JIP3 upon UVB-induced stress. Acts as a suppressor of inflammatory cell migration by regulating PTEN phosphorylation and stability. Acts as a negative regulator of VEGF-induced angiogenic endothelial cell activation. Required for centrosome positioning and centrosome-dependent exit from mitosis. Plays a role in terminal erythroid differentiation. May regulate closure of the eyelids and ventral body wall by inducing the assembly of actomyosin bundles. Promotes keratinocyte terminal differentiation. Involved in osteoblast compaction through the fibronectin fibrillogenesis cell-mediated matrix assembly process, essential for osteoblast mineralization. The chain is Rho-associated protein kinase 1 (ROCK1) from Pan troglodytes (Chimpanzee).